The following is a 139-amino-acid chain: Putative pre-16S rRNA nuclease (139 aa).

It belongs to the YqgF nuclease family.

It localises to the cytoplasm. Functionally, could be a nuclease involved in processing of the 5'-end of pre-16S rRNA. In Photorhabdus laumondii subsp. laumondii (strain DSM 15139 / CIP 105565 / TT01) (Photorhabdus luminescens subsp. laumondii), this protein is Putative pre-16S rRNA nuclease.